A 370-amino-acid chain; its full sequence is UDP-3-O-acylglucosamine N-acyltransferase (370 aa).

Catalysis depends on histidine 252, which acts as the Proton acceptor. Residues 348–370 (NAAAEKRDGPAPNAASKATGDKV) form a disordered region.

It belongs to the transferase hexapeptide repeat family. LpxD subfamily. As to quaternary structure, homotrimer.

The enzyme catalyses a UDP-3-O-[(3R)-3-hydroxyacyl]-alpha-D-glucosamine + a (3R)-hydroxyacyl-[ACP] = a UDP-2-N,3-O-bis[(3R)-3-hydroxyacyl]-alpha-D-glucosamine + holo-[ACP] + H(+). The protein operates within bacterial outer membrane biogenesis; LPS lipid A biosynthesis. Functionally, catalyzes the N-acylation of UDP-3-O-acylglucosamine using 3-hydroxyacyl-ACP as the acyl donor. Is involved in the biosynthesis of lipid A, a phosphorylated glycolipid that anchors the lipopolysaccharide to the outer membrane of the cell. The protein is UDP-3-O-acylglucosamine N-acyltransferase of Paraburkholderia phytofirmans (strain DSM 17436 / LMG 22146 / PsJN) (Burkholderia phytofirmans).